Consider the following 265-residue polypeptide: uncharacterized protein (265 aa).

Glu47 serves as a coordination point for thiamine diphosphate. Residues 204–247 form a thiamine pyrophosphate binding region; that stretch reads QHQMWLVQHILRVARHCGFTVTTMEMTLIETQVRLKITVKSDRT.

Belongs to the TPP enzyme family. Mg(2+) is required as a cofactor. It depends on thiamine diphosphate as a cofactor.

In terms of biological role, truncated acetolactase synthase; no longer catalytically active. This is an uncharacterized protein from Haemophilus influenzae (strain ATCC 51907 / DSM 11121 / KW20 / Rd).